Consider the following 163-residue polypeptide: Cyanate hydratase (163 aa).

Residues R103, E106, and S129 contribute to the active site.

This sequence belongs to the cyanase family.

The enzyme catalyses cyanate + hydrogencarbonate + 3 H(+) = NH4(+) + 2 CO2. Catalyzes the reaction of cyanate with bicarbonate to produce ammonia and carbon dioxide. The sequence is that of Cyanate hydratase from Ajellomyces dermatitidis (strain ER-3 / ATCC MYA-2586) (Blastomyces dermatitidis).